The primary structure comprises 181 residues: Acireductone dioxygenase (181 aa).

Fe(2+) is bound by residues His-97, His-99, Glu-103, and His-141. Ni(2+) contacts are provided by His-97, His-99, Glu-103, and His-141.

Belongs to the acireductone dioxygenase (ARD) family. In terms of assembly, monomer. It depends on Fe(2+) as a cofactor. Ni(2+) is required as a cofactor.

The enzyme catalyses 1,2-dihydroxy-5-(methylsulfanyl)pent-1-en-3-one + O2 = 3-(methylsulfanyl)propanoate + CO + formate + 2 H(+). It carries out the reaction 1,2-dihydroxy-5-(methylsulfanyl)pent-1-en-3-one + O2 = 4-methylsulfanyl-2-oxobutanoate + formate + 2 H(+). Its pathway is amino-acid biosynthesis; L-methionine biosynthesis via salvage pathway; L-methionine from S-methyl-5-thio-alpha-D-ribose 1-phosphate: step 5/6. In terms of biological role, catalyzes 2 different reactions between oxygen and the acireductone 1,2-dihydroxy-3-keto-5-methylthiopentene (DHK-MTPene) depending upon the metal bound in the active site. Fe-containing acireductone dioxygenase (Fe-ARD) produces formate and 2-keto-4-methylthiobutyrate (KMTB), the alpha-ketoacid precursor of methionine in the methionine recycle pathway. Ni-containing acireductone dioxygenase (Ni-ARD) produces methylthiopropionate, carbon monoxide and formate, and does not lie on the methionine recycle pathway. This is Acireductone dioxygenase from Pseudomonas fluorescens (strain Pf0-1).